We begin with the raw amino-acid sequence, 440 residues long: Protein disulfide-isomerase 5-2 (440 aa).

An N-terminal signal peptide occupies residues 1–23; sequence MRSLKLLLCWISFLTLSISISAS. In terms of domain architecture, Thioredoxin spans 24–139; the sequence is SDDQFTLDGT…LVRYLKKFVA (116 aa). Residues cysteine 61 and cysteine 64 each act as nucleophile in the active site. Cysteine 61 and cysteine 64 form a disulfide bridge. A Phosphothreonine modification is found at threonine 160. Asparagine 171 is a glycosylation site (N-linked (GlcNAc...) asparagine). Residues 376 to 396 form a helical membrane-spanning segment; sequence SMIGIRSVYILVFLVAVIMML. The tract at residues 406–440 is disordered; sequence TGVRTATAVRERVDQATTVPEDESSEHKPSDKKED. A compositionally biased stretch (basic and acidic residues) spans 430 to 440; the sequence is SEHKPSDKKED.

The protein belongs to the protein disulfide isomerase family. Widely expressed.

The protein resides in the membrane. Acts as a protein-folding catalyst that interacts with nascent polypeptides to catalyze the formation, isomerization, and reduction or oxidation of disulfide bonds. This Arabidopsis thaliana (Mouse-ear cress) protein is Protein disulfide-isomerase 5-2 (PDIL5-2).